A 517-amino-acid chain; its full sequence is Heat shock 70-related protein 5 (517 aa).

It belongs to the heat shock protein 70 family.

In terms of biological role, may function in protein folding and assembly, and disassembly of protein complexes. This is Heat shock 70-related protein 5 from Dictyostelium discoideum (Social amoeba).